A 376-amino-acid polypeptide reads, in one-letter code: MSFFSNLRAVNKLYPNQASFITDNTRLLTSTPAGFTNVLNAPSVRNIGNNRFQPGYQLSNNQFVSTSDINRITRNNDVPNIRGVFQGISDPQINSLSQLRRVDNVPDFNYHTKQTRSNAVKQNFPETNVRTPEGVQNALQQNPRLHSYMQSLKVGGTGILLATGGYFLFSAATLVQDIINAINNTGGSYYVQGKDAGEIAEACLLLQRTCRQDPNLNQSDVTICPFDPLLPNNPPELTNMCQGFNYEVEKTVCRGSDPSADPDSPQYVDISDLPAGQTLMCIEPYSFGDLVGDLGLDWLLGDEGLVGKSSNVSDSVSGKLMPIILLIGAVLFLGLIFYFIYRYMMKGGGGGGVGAATSPTPIVISMQNPTPTTAPR.

Residues 154–174 form a helical membrane-spanning segment; that stretch reads VGGTGILLATGGYFLFSAATL. A glycan (N-linked (GlcNAc...) asparagine; by host) is linked at Asn-183. Residues 320-340 form a helical membrane-spanning segment; sequence LMPIILLIGAVLFLGLIFYFI.

It belongs to the baculoviridae E56 family.

The protein resides in the virion membrane. Structural protein that plays a role in the first steps of per os larva infection. The protein is Per os infectivity factor 5 (E56) of Autographa californica nuclear polyhedrosis virus (AcMNPV).